The sequence spans 572 residues: Proline--tRNA ligase (572 aa).

It belongs to the class-II aminoacyl-tRNA synthetase family. ProS type 1 subfamily. Homodimer.

The protein localises to the cytoplasm. The catalysed reaction is tRNA(Pro) + L-proline + ATP = L-prolyl-tRNA(Pro) + AMP + diphosphate. In terms of biological role, catalyzes the attachment of proline to tRNA(Pro) in a two-step reaction: proline is first activated by ATP to form Pro-AMP and then transferred to the acceptor end of tRNA(Pro). As ProRS can inadvertently accommodate and process non-cognate amino acids such as alanine and cysteine, to avoid such errors it has two additional distinct editing activities against alanine. One activity is designated as 'pretransfer' editing and involves the tRNA(Pro)-independent hydrolysis of activated Ala-AMP. The other activity is designated 'posttransfer' editing and involves deacylation of mischarged Ala-tRNA(Pro). The misacylated Cys-tRNA(Pro) is not edited by ProRS. The polypeptide is Proline--tRNA ligase (Pectobacterium atrosepticum (strain SCRI 1043 / ATCC BAA-672) (Erwinia carotovora subsp. atroseptica)).